The sequence spans 485 residues: Pumilio domain-containing protein 6 (485 aa).

2 disordered regions span residues 29-48 and 55-76; these read NKTH…PYRH and SDLD…TPPP. Positions 55–68 are enriched in polar residues; sequence SDLDNYIFNSGSGS. Pumilio repeat units follow at residues 86-124, 125-163, 164-200, 201-236, 237-279, 287-324, 326-361, and 372-411; these read EVLL…AVFE, KLTE…ELLR, QMID…QLIQ, ELST…TFFV, HFLS…FRIQ, CIVR…TIID, CLLR…EMME, and ELNR…RQLP. The segment at 439–454 is RNA-binding; sequence FSSGKKIIDSVMRHGV.

RNA-binding protein that binds to the consensus sequence 5'-CUCUGUAUCUUGU-3' in mRNA 3'-UTRs and modulates mRNA expression and stability. Functions redundantly with puf-5 and puf-7 in oocyte formation and organization, early embryonic cell divisions, and repression of expression of glp-1 and other maternal mRNAs in late oogenesis. In Caenorhabditis elegans, this protein is Pumilio domain-containing protein 6.